A 1328-amino-acid chain; its full sequence is Retrovirus-related Pol polyprotein from transposon TNT 1-94 (1328 aa).

The interval 189 to 265 (PENQGQALIT…SGQKNDDNTA (77 aa)) is disordered. A compositionally biased stretch (basic residues) spans 217-229 (ARGKSKNRSKSRV). A CCHC-type zinc finger spans residues 230 to 247 (RNCYNCNQPGHFKRDCPN). Basic and acidic residues predominate over residues 241 to 253 (FKRDCPNPRKGKG). Aspartate 297 serves as the catalytic For protease activity. The 170-residue stretch at 473–642 (SSERKLNILD…IPERVWTNKE (170 aa)) folds into the Integrase catalytic domain. A compositionally biased stretch (polar residues) spans 729–742 (TIPSTSNNPTSAES). The tract at residues 729–800 (TIPSTSNNPT…RVESRRYPST (72 aa)) is disordered. Positions 770-798 (EVEHPTQGEEQHQPLRRSERPRVESRRYP) are enriched in basic and acidic residues.

The enzyme catalyses DNA(n) + a 2'-deoxyribonucleoside 5'-triphosphate = DNA(n+1) + diphosphate. The protein is Retrovirus-related Pol polyprotein from transposon TNT 1-94 of Nicotiana tabacum (Common tobacco).